A 186-amino-acid polypeptide reads, in one-letter code: Superoxide dismutase [Cu-Zn] (186 aa).

The signal sequence occupies residues 1–20 (MKKTVLALMFSCGMVASAFA). Positions 79, 81, and 104 each coordinate Cu cation. A disulfide bond links cysteine 86 and cysteine 182. 4 residues coordinate Zn(2+): histidine 104, histidine 113, histidine 122, and aspartate 125. Histidine 160 lines the Cu cation pocket.

Belongs to the Cu-Zn superoxide dismutase family. Homodimer. Cu cation serves as cofactor. It depends on Zn(2+) as a cofactor.

It localises to the periplasm. It catalyses the reaction 2 superoxide + 2 H(+) = H2O2 + O2. Destroys radicals which are normally produced within the cells and which are toxic to biological systems. The polypeptide is Superoxide dismutase [Cu-Zn] (sodC) (Pasteurella multocida (strain Pm70)).